The primary structure comprises 370 residues: Cobalt-precorrin-5B C(1)-methyltransferase (370 aa).

This sequence belongs to the CbiD family.

It catalyses the reaction Co-precorrin-5B + S-adenosyl-L-methionine = Co-precorrin-6A + S-adenosyl-L-homocysteine. Its pathway is cofactor biosynthesis; adenosylcobalamin biosynthesis; cob(II)yrinate a,c-diamide from sirohydrochlorin (anaerobic route): step 6/10. In terms of biological role, catalyzes the methylation of C-1 in cobalt-precorrin-5B to form cobalt-precorrin-6A. This Pseudomonas syringae pv. tomato (strain ATCC BAA-871 / DC3000) protein is Cobalt-precorrin-5B C(1)-methyltransferase.